We begin with the raw amino-acid sequence, 331 residues long: MVRIAINGFGRIGRLVLRIALSRKNIEVVAINDPFITVDYAAYMFKYDSTHGRFDGEVSHDGKALIIDGKKVLVFQERDPATLPWGAEKIDIAIDSTGIFKELDSAQKHIDAGAKKVVITAPSSTAPMFVVGVNEDKYAGQTIVSNASCTTNCLAPLAKIINNAFGIEEGLMTTVHSITATQKTVDGPSHKDWRGGRTASGNIIPSSTGAAKAVGKVLPELQGKLTGMAFRVPTVDVSVVDLTVKLAKPATYEEIKAVVKKASENELKGVMGYTEDAVVSSDFLGDTHSSIFDAAAGIQLSPQFVKLVSWYDNEFGYSTRVVDLVELVAKN.

NAD(+) contacts are provided by residues 11 to 12, D33, and E77; that span reads RI. S148 bears the Phosphoserine mark. Residue 148-150 coordinates D-glyceraldehyde 3-phosphate; it reads SCT. The active-site Nucleophile is the C149. S177 bears the Phosphoserine mark. A D-glyceraldehyde 3-phosphate-binding site is contributed by T179. A Phosphoserine modification is found at S200. Residues 208-209 and R231 contribute to the D-glyceraldehyde 3-phosphate site; that span reads TG. Position 313 (N313) interacts with NAD(+).

The protein belongs to the glyceraldehyde-3-phosphate dehydrogenase family. Homotetramer.

It is found in the cytoplasm. It carries out the reaction D-glyceraldehyde 3-phosphate + phosphate + NAD(+) = (2R)-3-phospho-glyceroyl phosphate + NADH + H(+). It participates in carbohydrate degradation; glycolysis; pyruvate from D-glyceraldehyde 3-phosphate: step 1/5. This is Glyceraldehyde-3-phosphate dehydrogenase 3 from Kluyveromyces marxianus (Yeast).